The chain runs to 328 residues: GMP reductase (328 aa).

Cys176 serves as the catalytic Thioimidate intermediate. An NADP(+)-binding site is contributed by 205–228 (IIADGGIRTHGDIAKSIRFGASMI).

This sequence belongs to the IMPDH/GMPR family. GuaC type 2 subfamily.

It catalyses the reaction IMP + NH4(+) + NADP(+) = GMP + NADPH + 2 H(+). Catalyzes the irreversible NADPH-dependent deamination of GMP to IMP. It functions in the conversion of nucleobase, nucleoside and nucleotide derivatives of G to A nucleotides, and in maintaining the intracellular balance of A and G nucleotides. The polypeptide is GMP reductase (Streptococcus pneumoniae (strain JJA)).